Here is a 208-residue protein sequence, read N- to C-terminus: Uracil phosphoribosyltransferase (208 aa).

Residues arginine 78, arginine 103, and 130 to 138 (DPMLATGGS) each bind 5-phospho-alpha-D-ribose 1-diphosphate. Uracil contacts are provided by residues isoleucine 193 and 198-200 (GDA). Residue aspartate 199 participates in 5-phospho-alpha-D-ribose 1-diphosphate binding.

It belongs to the UPRTase family. Mg(2+) serves as cofactor.

It carries out the reaction UMP + diphosphate = 5-phospho-alpha-D-ribose 1-diphosphate + uracil. Its pathway is pyrimidine metabolism; UMP biosynthesis via salvage pathway; UMP from uracil: step 1/1. With respect to regulation, allosterically activated by GTP. Its function is as follows. Catalyzes the conversion of uracil and 5-phospho-alpha-D-ribose 1-diphosphate (PRPP) to UMP and diphosphate. This chain is Uracil phosphoribosyltransferase, found in Neisseria meningitidis serogroup A / serotype 4A (strain DSM 15465 / Z2491).